We begin with the raw amino-acid sequence, 731 residues long: Ubiquitin carboxyl-terminal hydrolase 17 (731 aa).

Zn(2+) contacts are provided by C57, C60, C68, C71, C77, C81, H90, and C94. An MYND-type zinc finger spans residues 57–94; it reads CAVCLYPTTTRCSQCKSVRYCSSKCQILHWRRGHKEEC. Disordered regions lie at residues 171-219 and 262-281; these read YETR…DSAN and LPSKANSKPKVSQASSSGLK. Polar residues-rich tracts occupy residues 207–219 and 265–281; these read GNQNSRRSGDSAN and KANSKPKVSQASSSGLK. Positions 329-633 constitute a USP domain; sequence FGLVNLGNSC…GAYMLLYARD (305 aa). Residue C338 is the Nucleophile of the active site. H592 serves as the catalytic Proton acceptor. Residues 637–702 form a disordered region; sequence PVSKNGGRKS…TSSCSTKDSS (66 aa). Over residues 677–701 the composition is skewed to low complexity; the sequence is DWSSGSLSSMFSSSDTTSSCSTKDS.

This sequence belongs to the peptidase C19 family.

It carries out the reaction Thiol-dependent hydrolysis of ester, thioester, amide, peptide and isopeptide bonds formed by the C-terminal Gly of ubiquitin (a 76-residue protein attached to proteins as an intracellular targeting signal).. Its function is as follows. Recognizes and hydrolyzes the peptide bond at the C-terminal Gly of ubiquitin. Involved in the processing of poly-ubiquitin precursors as well as that of ubiquitinated proteins. The sequence is that of Ubiquitin carboxyl-terminal hydrolase 17 (UBP17) from Arabidopsis thaliana (Mouse-ear cress).